Here is a 660-residue protein sequence, read N- to C-terminus: Methionine--tRNA ligase (660 aa).

The short motif at 15–25 (YYPSDKLHIGH) is the 'HIGH' region element. The 'KMSKS' region motif lies at 311 to 315 (KMSKS). Lys-314 is a binding site for ATP. Positions 535-554 (LMGGSKKPEEAPKDEKEESD) are disordered. The span at 540-550 (KKPEEAPKDEK) shows a compositional bias: basic and acidic residues. In terms of domain architecture, tRNA-binding spans 560 to 660 (DFSKVELRIA…GALPNGSLVK (101 aa)).

The protein belongs to the class-I aminoacyl-tRNA synthetase family. MetG type 2B subfamily. As to quaternary structure, homodimer.

Its subcellular location is the cytoplasm. The enzyme catalyses tRNA(Met) + L-methionine + ATP = L-methionyl-tRNA(Met) + AMP + diphosphate. Functionally, is required not only for elongation of protein synthesis but also for the initiation of all mRNA translation through initiator tRNA(fMet) aminoacylation. The protein is Methionine--tRNA ligase (metG) of Halalkalibacterium halodurans (strain ATCC BAA-125 / DSM 18197 / FERM 7344 / JCM 9153 / C-125) (Bacillus halodurans).